The following is a 252-amino-acid chain: Metalloprotease LoiP (252 aa).

Residues 1–18 form the signal peptide; that stretch reads MKIRALLVAMSVATVLTG. A lipid anchor (N-palmitoyl cysteine) is attached at cysteine 19. Cysteine 19 carries the S-diacylglycerol cysteine lipid modification. A disulfide bridge connects residues cysteine 53 and cysteine 108. Zn(2+) is bound at residue histidine 130. Residue glutamate 131 is part of the active site. Zn(2+) contacts are provided by histidine 134 and glutamate 189. Positions 224–252 are disordered; it reads RQSSMFDDHPASAERAQHIRDRMSADGIK.

It belongs to the peptidase M48B family. In terms of assembly, interacts with Era and BepA. Zn(2+) is required as a cofactor. In terms of processing, the intramolecular disulfide bond improves the stability and the activity of LoiP. It forms even in the absence of the oxido-reductase DsbA.

The protein resides in the cell outer membrane. Metalloprotease that cleaves substrates preferentially between Phe-Phe residues. Plays a role in response to some stress conditions. Seems to regulate the expression of speB. This is Metalloprotease LoiP (loiP) from Escherichia coli (strain K12).